A 276-amino-acid polypeptide reads, in one-letter code: Large ribosomal subunit protein uL2c (276 aa).

Residues 225 to 276 are disordered; that stretch reads AMNPVDHPHGGGEGRTPIGRKKPVTPWGYSALGKKSRKRNRYSDASILRRRE.

It belongs to the universal ribosomal protein uL2 family. In terms of assembly, part of the 50S ribosomal subunit.

The protein localises to the plastid. Its subcellular location is the chloroplast. The chain is Large ribosomal subunit protein uL2c (rpl2) from Pinus thunbergii (Japanese black pine).